Here is a 254-residue protein sequence, read N- to C-terminus: Imidazole glycerol phosphate synthase subunit HisF (254 aa).

Catalysis depends on residues D11 and D130.

Belongs to the HisA/HisF family. As to quaternary structure, heterodimer of HisH and HisF.

It is found in the cytoplasm. The enzyme catalyses 5-[(5-phospho-1-deoxy-D-ribulos-1-ylimino)methylamino]-1-(5-phospho-beta-D-ribosyl)imidazole-4-carboxamide + L-glutamine = D-erythro-1-(imidazol-4-yl)glycerol 3-phosphate + 5-amino-1-(5-phospho-beta-D-ribosyl)imidazole-4-carboxamide + L-glutamate + H(+). It functions in the pathway amino-acid biosynthesis; L-histidine biosynthesis; L-histidine from 5-phospho-alpha-D-ribose 1-diphosphate: step 5/9. IGPS catalyzes the conversion of PRFAR and glutamine to IGP, AICAR and glutamate. The HisF subunit catalyzes the cyclization activity that produces IGP and AICAR from PRFAR using the ammonia provided by the HisH subunit. The sequence is that of Imidazole glycerol phosphate synthase subunit HisF from Laribacter hongkongensis (strain HLHK9).